The following is a 571-amino-acid chain: MDHTSPTYMLANLTHLHSEQLLQGLNLLRQHHELCDIILRVGDVKIHAHKVVLASVSPYFKAMFTGNLSEKENSEVEFQCIDETALQAIVEYAYTGTVFISQDTVESLLPAANLLQIKLVLKECCAFLESQLDPGNCIGISRFAETYGCRDLYLAATKYICQNFEAVCQTEEFFELTHADLDEIVSNDCLNVATEETVFYALESWIKYDVQERQKYLAQLLNSVRLPLLSVKFLTRLYEANHLIRDDRTCKHLLNEALKYHFMPEHRLSHQTVLMTRPRCAPKVLCAVGGKSGLFACLDSVEMYFPQNDSWIGLAPLNIPRYEFGICVLDQKVYVIGGIATNVRPGVTIRKHENSVECWNPDTNTWTSLERMNESRSTLGVVVLAGELYALGGYDGQSYLQSVEKYIPKIRKWQPVAPMTTTRSCFAAAVLDGMIYAIGGYGPAHMNSVERYDPSKDSWEMVASMADKRIHFGVGVMLGFIFVVGGHNGVSHLSSIERYDPHQNQWTVCRPMKEPRTGVGAAVIDNYLYVVGGHSGSSYLNTVQKYDPISDTWLDSAGMIYCRCNFGLTAL.

One can recognise a BTB domain in the interval 35-102 (CDIILRVGDV…AYTGTVFISQ (68 aa)). Kelch repeat units lie at residues 284 to 331 (VLCA…VLDQ), 332 to 386 (KVYV…VLAG), 387 to 433 (ELYA…VLDG), 435 to 479 (IYAI…VMLG), 480 to 526 (FIFV…VIDN), and 528 to 570 (LYVV…GLTA).

The sequence is that of Kelch-like protein 28 (KLHL28) from Homo sapiens (Human).